The following is a 620-amino-acid chain: Transcription factor kayak (620 aa).

Disordered stretches follow at residues 1-36 (MKVKVERTTITKKTTTTKPKPDEEDNNDDNSSSNGV) and 184-288 (SDTD…EKRR). The segment covering 184-194 (SDTDDSNASWN) has biased composition (polar residues). Low complexity-rich tracts occupy residues 201 to 233 (GDTTDTSSGATDSTSYQNNSMLGNGSNGSGANN) and 249 to 266 (ANNNSNTNTSNSATPAAR). The region spanning 284–347 (EEKRRIRRER…NQLKYVIEAH (64 aa)) is the bZIP domain. The tract at residues 286 to 305 (KRRIRRERNKAAAARCRKRR) is basic motif. A leucine-zipper region spans residues 312 to 340 (LTEEVDALVKKGDTLKAEITTLTELRNQL). The segment at 375–414 (STGGSSCGSVHSNHSHNNNNNNNNSNDSSSGTITGFDATL) is disordered. Residues 377–405 (GGSSCGSVHSNHSHNNNNNNNNSNDSSSG) show a composition bias toward low complexity. Serine 422 carries the post-translational modification Phosphoserine. 2 disordered regions span residues 447 to 466 (GLDSESSSLDQDGPPPAKRA) and 590 to 620 (SGPLIPNCSSQNKHPLELPTPTTEPSKLCPL).

This sequence belongs to the bZIP family. Fos subfamily. Homodimer. Heterodimer with Jra. The kay-Jra heterodimer binds more stably to the AP-1 site than either of the two proteins alone.

It localises to the nucleus. Developmentally regulated transcription factor AP-1 binds and recognizes the enhancer DNA sequence: 5'-TGA[CG]TCA-3'. May play a role in the function or determination of a particular subset of cells in the developing embryo. It is able to carry out its function either independently of or in conjunction with Jra. This chain is Transcription factor kayak, found in Drosophila willistoni (Fruit fly).